The primary structure comprises 150 residues: Snake venom vascular endothelial growth factor toxin barietin (150 aa).

The signal sequence occupies residues Met-1–Gly-24. Glu-25 carries the pyrrolidone carboxylic acid (Glu) modification. Disulfide bonds link Cys-38-Cys-80, Cys-69-Cys-115, and Cys-73-Cys-117. Positions Pro-119–Leu-150 are disordered. A propeptide spanning residues Gly-122–Leu-150 is cleaved from the precursor.

Belongs to the PDGF/VEGF growth factor family. Snake venom VEGF subfamily. Homodimer; disulfide-linked. Interacts with high affinity with VEGF receptor-2 (KDR), and with a lower affinity with VEGF receptor-1 (FLT1). Does not bind VEGF receptor-3 (FLT4) and neuropilin-1 (NRP1). Expressed by the venom gland.

The protein resides in the secreted. In terms of biological role, snake venom VEGFs that may contribute to venom dispersion and prey subjugation by inducing vascular permeability and hypotension. This protein induces an increase in capillary permeability after intradermal injection, as well as a drastic hypotensive effect after intravenous injection. The hypotension is mediated by nitric oxide (NO), which is produced by VEGF-activated endothelium NO synthase. Also induces angiogenesis in vitro, probably through VEGF receptor (KDR/VEGFR-2) signaling. In Bitis arietans (African puff adder), this protein is Snake venom vascular endothelial growth factor toxin barietin.